Reading from the N-terminus, the 193-residue chain is Ion-translocating oxidoreductase complex subunit A (193 aa).

Helical transmembrane passes span 5–25 (LLLL…FLGL), 39–59 (VGMG…AYLV), 72–92 (LSTL…EMVI), 102–122 (ILGI…LALL), 134–154 (VVYG…FASL), and 170–190 (IAIG…FTGL).

It belongs to the NqrDE/RnfAE family. As to quaternary structure, the complex is composed of six subunits: RnfA, RnfB, RnfC, RnfD, RnfE and RnfG.

It is found in the cell inner membrane. Part of a membrane-bound complex that couples electron transfer with translocation of ions across the membrane. The protein is Ion-translocating oxidoreductase complex subunit A of Tolumonas auensis (strain DSM 9187 / NBRC 110442 / TA 4).